A 160-amino-acid chain; its full sequence is Small ribosomal subunit protein uS9 (160 aa).

It belongs to the universal ribosomal protein uS9 family.

The protein is Small ribosomal subunit protein uS9 of Bradyrhizobium sp. (strain ORS 278).